The following is a 73-amino-acid chain: Cytochrome b559 subunit alpha (73 aa).

The helical transmembrane segment at 21 to 35 (IIHSITVPSLFIAGW) threads the bilayer. Residue His-23 participates in heme binding.

It belongs to the PsbE/PsbF family. As to quaternary structure, heterodimer of an alpha subunit and a beta subunit. PSII is composed of 1 copy each of membrane proteins PsbA, PsbB, PsbC, PsbD, PsbE, PsbF, PsbH, PsbI, PsbJ, PsbK, PsbL, PsbM, PsbT, PsbY, PsbZ, Psb30/Ycf12, at least 3 peripheral proteins of the oxygen-evolving complex and a large number of cofactors. It forms dimeric complexes. It depends on heme b as a cofactor.

The protein localises to the plastid. It is found in the chloroplast thylakoid membrane. In terms of biological role, this b-type cytochrome is tightly associated with the reaction center of photosystem II (PSII). PSII is a light-driven water:plastoquinone oxidoreductase that uses light energy to abstract electrons from H(2)O, generating O(2) and a proton gradient subsequently used for ATP formation. It consists of a core antenna complex that captures photons, and an electron transfer chain that converts photonic excitation into a charge separation. The sequence is that of Cytochrome b559 subunit alpha from Bigelowiella natans (Pedinomonas minutissima).